A 221-amino-acid chain; its full sequence is Pectate lyase C (221 aa).

Positions M1–A27 are cleaved as a signal peptide.

The protein belongs to the polysaccharide lyase 3 family. It depends on Ca(2+) as a cofactor.

The protein resides in the secreted. It carries out the reaction Eliminative cleavage of (1-&gt;4)-alpha-D-galacturonan to give oligosaccharides with 4-deoxy-alpha-D-galact-4-enuronosyl groups at their non-reducing ends.. It catalyses the reaction Eliminative cleavage of (1-&gt;4)-alpha-D-galacturonan methyl ester to give oligosaccharides with 4-deoxy-6-O-methyl-alpha-D-galact-4-enuronosyl groups at their non-reducing ends.. It participates in glycan metabolism; pectin degradation; 2-dehydro-3-deoxy-D-gluconate from pectin: step 2/5. In terms of biological role, catalyzes the depolymerization of both polygalacturonate and pectins of methyl esterification degree from 22 to 89%, with an endo mode of action. In contrast to the majority of pectate lyases, displays high activity on highly methylated pectins. Is also able to cleave trigalacturonate to galacturonic acid and unsaturated digalacturonate. This chain is Pectate lyase C (pelC), found in Bacillus subtilis (strain 168).